A 234-amino-acid polypeptide reads, in one-letter code: Transcriptional regulatory protein CseB (234 aa).

The Response regulatory domain occupies 6–119; it reads HVLFVEDDDV…VLVARIRAVL (114 aa). Aspartate 55 carries the 4-aspartylphosphate modification. Positions 140–234 form a DNA-binding region, ompR/PhoB-type; sequence GGVLTFGDLE…VRGFGYKLKA (95 aa).

Post-translationally, phosphorylated by CseC.

Its subcellular location is the cytoplasm. Member of the two-component regulatory system CseB/CseC involved in the stability of the cell envelope. CseB activates transcription of RNA polymerase sigma-E factor, in response to changes in the cell envelope. This Streptomyces coelicolor (strain ATCC BAA-471 / A3(2) / M145) protein is Transcriptional regulatory protein CseB (cseB).